The following is a 490-amino-acid chain: Coagulation factor X (490 aa).

An N-terminal signal peptide occupies residues 1–20; it reads MANPLHLVLLGAALAGLLLS. A propeptide spanning residues 21 to 40 is cleaved from the precursor; it reads GSSVFISRRAANDVLARTRR. Residues 41-85 form the Gla domain; that stretch reads ANSFLEELKKGNLERECMEENCSYEEALEVFEDREKTNEFWNKYV. Residues E46, E47, E54, E56, E59, and E60 each carry the 4-carboxyglutamate modification. C57 and C62 are oxidised to a cystine. N-linked (GlcNAc...) asparagine glycosylation occurs at N61. 4-carboxyglutamate occurs at positions 65, 66, 69, 72, 75, and 79. The EGF-like 1; calcium-binding domain occupies 86–122; sequence DGDQCESNPCQNQGTCKDGLGMYTCSCVEGYEGQDCE. 11 cysteine pairs are disulfide-bonded: C90/C101, C95/C110, C112/C121, C129/C140, C136/C149, C151/C164, C172/C340, C239/C244, C259/C275, C388/C402, and C413/C441. D103 carries the (3R)-3-hydroxyaspartate modification. One can recognise an EGF-like 2 domain in the interval 125-165; the sequence is TRKLCSLDNGGCDQFCKEEENSVLCSCASGYTLGDNGKSCI. Residues 183–230 form a disordered region; sequence SPATNSSEGPPEAPGPEQQDDGNLTATENPFNLLDSPEPPPEDDSSSL. A propeptide spans 184 to 232 (activation peptide); it reads PATNSSEGPPEAPGPEQQDDGNLTATENPFNLLDSPEPPPEDDSSSLVR. N-linked (GlcNAc...) asparagine glycosylation is found at N187 and N205. A compositionally biased stretch (polar residues) spans 203–212; that stretch reads DGNLTATENP. One can recognise a Peptidase S1 domain in the interval 233 to 465; the sequence is IVGGQDCRDG…FLKWIEKSMR (233 aa). Active-site charge relay system residues include H274 and D320. Residue S417 is the Charge relay system of the active site.

The protein belongs to the peptidase S1 family. In terms of assembly, the two chains are formed from a single-chain precursor by the excision of two Arg residues and are held together by 1 or more disulfide bonds. Forms a heterodimer with SERPINA5. The vitamin K-dependent, enzymatic carboxylation of some glutamate residues allows the modified protein to bind calcium. Post-translationally, N- and O-glycosylated. In terms of processing, proteolytically cleaved and activated by cathepsin CTSG. The activation peptide is cleaved by factor IXa (in the intrinsic pathway), or by factor VIIa (in the extrinsic pathway). The iron and 2-oxoglutarate dependent 3-hydroxylation of aspartate and asparagine is (R) stereospecific within EGF domains.

Its subcellular location is the secreted. It carries out the reaction Selective cleavage of Arg-|-Thr and then Arg-|-Ile bonds in prothrombin to form thrombin.. Its activity is regulated as follows. Inhibited by SERPINA5. Factor Xa is a vitamin K-dependent glycoprotein that converts prothrombin to thrombin in the presence of factor Va, calcium and phospholipid during blood clotting. Factor Xa activates pro-inflammatory signaling pathways in a protease-activated receptor (PAR)-dependent manner. This Oryctolagus cuniculus (Rabbit) protein is Coagulation factor X (F10).